The primary structure comprises 90 residues: Protein P18 (90 aa).

A run of 3 helical transmembrane segments spans residues 1-21, 37-57, and 60-80; these read MPFGLIVIGIILAIAAYRDTL, GFGYWVLAAVILGFAASIKPI, and PVNAFMILLMIVLLIRKRGAI.

It is found in the virion membrane. Functionally, component of the phage injection machinery. Required for DNA injection in the membrane transformation event. Involved in the formation of the membrane tail tube to connect the virus interior with the host cytosol. Essential for viral infectivity. The sequence is that of Protein P18 (XVIII) from Acinetobacter calcoaceticus (Arthrobacter siderocapsulatus).